A 276-amino-acid chain; its full sequence is uncharacterized protein (276 aa).

Helical transmembrane passes span isoleucine 5–valine 25, isoleucine 31–leucine 51, valine 63–valine 83, valine 89–leucine 109, valine 119–isoleucine 139, isoleucine 142–leucine 162, proline 168–proline 188, leucine 200–tyrosine 220, alanine 231–alanine 251, and proline 253–valine 273. 2 consecutive EamA domains span residues threonine 12–glutamate 133 and valine 150–arginine 274.

This sequence belongs to the EamA transporter family.

It is found in the cell membrane. This is an uncharacterized protein from Archaeoglobus fulgidus (strain ATCC 49558 / DSM 4304 / JCM 9628 / NBRC 100126 / VC-16).